Here is a 418-residue protein sequence, read N- to C-terminus: MTIPFDHWPEWPQHSDRTRRKIEEVFQSNRWAISGYWTGEESMERKFAKAFADFNGVPYCVPTTSGSTALMLALEALGIGEGDEVIVPSLTWIATATAVLNVNALPVFVDVEADTYCIDPQLIKSAITDKTKAIIPVHLFGSMANMDEINEIAQEHNLFVIEDCAQSHGSVWNNQRAGTIGDIGAFSCQQGKVLTAGEGGIIVTKNPRLFELIQQLRADSRVYCDDSSELMHGDMQLVKKGDIQGSNYCLSEFQSAILLDQLQELDDKNAIREKNAMFLNDALSKIDGIKVMKRPPQVSRQTYYGYVFRFDPVKFGGLNADQFCEILREKLNMGTFYLHPPYLPVHKNPLFCPWTKNRYLKSVRKTEAYWRGLHYPVSERASGQSIVIHHAILLAEPSHLSLLVDAVAELARKFCVTH.

An N6-(pyridoxal phosphate)lysine modification is found at Lys192.

Belongs to the DegT/DnrJ/EryC1 family. L-glutamine:2-deoxy-scyllo-inosose/scyllo-inosose aminotransferase subfamily. Pyridoxal 5'-phosphate serves as cofactor.

It carries out the reaction 2-deoxy-L-scyllo-inosose + L-glutamine = 2-deoxy-scyllo-inosamine + 2-oxoglutaramate. The catalysed reaction is 3-amino-2,3-dideoxy-scyllo-inosose + L-glutamine = 2-deoxystreptamine + 2-oxoglutaramate. The protein operates within metabolic intermediate biosynthesis; 2-deoxystreptamine biosynthesis; 2-deoxystreptamine from D-glucose 6-phosphate: step 2/4. It functions in the pathway metabolic intermediate biosynthesis; 2-deoxystreptamine biosynthesis; 2-deoxystreptamine from D-glucose 6-phosphate: step 4/4. Its pathway is antibiotic biosynthesis; butirosin biosynthesis. Catalyzes the PLP-dependent transamination of 2-deoxy-scyllo-inosose (2-DOI) to form 2-deoxy-scyllo-inosamine (2-DOIA) using L-glutamine as the amino donor. Also catalyzes the transamination of 3-amino-2,3-dideoxy-scyllo-inosose (keto-2-DOIA) into 2-deoxystreptamine (2-DOS). This is L-glutamine:2-deoxy-scyllo-inosose aminotransferase (btrR) from Niallia circulans (Bacillus circulans).